The chain runs to 102 residues: Nuclear protein 2 (102 aa).

2 disordered regions span residues 1 to 26 and 46 to 102; these read MDPP…ALPT and PASG…TRLA. The span at 85-102 shows a compositional bias: basic residues; it reads QRKRRQRQLQPRPRTRLA.

It belongs to the NUPR family.

It is found in the nucleus. Acts as a transcriptional repressor by inhibiting gene expression at the NUPR1 promoter in a p53/TP53-dependent manner in cancer cells. Involved in the G1 cell cycle arrest, and in a decrease in cell viability and cell proliferation of pancreatic cancer cells. Plays a role as a negative regulator of the protumoral factor NUPR1. This is Nuclear protein 2 from Mus musculus (Mouse).